The sequence spans 68 residues: Conotoxin Mr3.4 (68 aa).

Positions 1–19 (MSKLGVLLTICLLLFPLTA) are cleaved as a signal peptide. Positions 20-49 (VPLDGDQPADRPAERMQDDISSERHPFFDR) are excised as a propeptide. Disulfide bonds link C53–C67, C54–C63, and C59–C66. P65 bears the 4-hydroxyproline mark.

It belongs to the conotoxin M superfamily. In terms of tissue distribution, expressed by the venom duct.

The protein resides in the secreted. This chain is Conotoxin Mr3.4, found in Conus marmoreus (Marble cone).